Here is a 461-residue protein sequence, read N- to C-terminus: 23S rRNA (uracil(1939)-C(5))-methyltransferase RlmD (461 aa).

The segment at 1-26 (MAKHERGLRFQPTGGSKAPQIPTGKK) is disordered. One can recognise a TRAM domain in the interval 20 to 78 (QIPTGKKQRLSIERLANDGRGIAFFEGKTWFVLGALAGEEVEARVLGAHGKVVEARTER). 4 residues coordinate [4Fe-4S] cluster: cysteine 91, cysteine 97, cysteine 100, and cysteine 179. Residues glutamine 283, phenylalanine 312, asparagine 317, glutamate 333, aspartate 360, and aspartate 381 each contribute to the S-adenosyl-L-methionine site. Cysteine 407 functions as the Nucleophile in the catalytic mechanism.

It belongs to the class I-like SAM-binding methyltransferase superfamily. RNA M5U methyltransferase family. RlmD subfamily.

The enzyme catalyses uridine(1939) in 23S rRNA + S-adenosyl-L-methionine = 5-methyluridine(1939) in 23S rRNA + S-adenosyl-L-homocysteine + H(+). In terms of biological role, catalyzes the formation of 5-methyl-uridine at position 1939 (m5U1939) in 23S rRNA. In Pseudomonas fluorescens (strain Pf0-1), this protein is 23S rRNA (uracil(1939)-C(5))-methyltransferase RlmD.